The primary structure comprises 70 residues: Biotin carboxyl carrier protein of acetyl-CoA carboxylase (70 aa).

A Biotinyl-binding domain is found at 1–69; that stretch reads GTVVAPMVGL…QDGIKLFALK (69 aa). Lys-35 bears the N6-biotinyllysine mark.

It is found in the plastid. It localises to the chloroplast. It participates in lipid metabolism; fatty acid biosynthesis. In terms of biological role, this protein is a component of the acetyl coenzyme A carboxylase complex; first, biotin carboxylase catalyzes the carboxylation of the carrier protein and then the transcarboxylase transfers the carboxyl group to form malonyl-CoA. The polypeptide is Biotin carboxyl carrier protein of acetyl-CoA carboxylase (Solanum lycopersicum (Tomato)).